The following is a 335-amino-acid chain: Glycerol-3-phosphate dehydrogenase [NAD(P)+] (335 aa).

3 residues coordinate NADPH: Trp14, Arg33, and Lys111. Residues Lys111, Gly140, and Ser142 each coordinate sn-glycerol 3-phosphate. Position 144 (Ala144) interacts with NADPH. Lys195, Asp248, Ser258, Arg259, and Asn260 together coordinate sn-glycerol 3-phosphate. Lys195 serves as the catalytic Proton acceptor. Arg259 is an NADPH binding site. NADPH-binding residues include Val283 and Glu285.

The protein belongs to the NAD-dependent glycerol-3-phosphate dehydrogenase family.

The protein localises to the cytoplasm. The enzyme catalyses sn-glycerol 3-phosphate + NAD(+) = dihydroxyacetone phosphate + NADH + H(+). It carries out the reaction sn-glycerol 3-phosphate + NADP(+) = dihydroxyacetone phosphate + NADPH + H(+). The protein operates within membrane lipid metabolism; glycerophospholipid metabolism. Its function is as follows. Catalyzes the reduction of the glycolytic intermediate dihydroxyacetone phosphate (DHAP) to sn-glycerol 3-phosphate (G3P), the key precursor for phospholipid synthesis. This is Glycerol-3-phosphate dehydrogenase [NAD(P)+] from Burkholderia mallei (strain NCTC 10247).